We begin with the raw amino-acid sequence, 184 residues long: ATP synthase subunit delta (184 aa).

Belongs to the ATPase delta chain family. F-type ATPases have 2 components, F(1) - the catalytic core - and F(0) - the membrane proton channel. F(1) has five subunits: alpha(3), beta(3), gamma(1), delta(1), epsilon(1). CF(0) has four main subunits: a(1), b(1), b'(1) and c(10-14). The alpha and beta chains form an alternating ring which encloses part of the gamma chain. F(1) is attached to F(0) by a central stalk formed by the gamma and epsilon chains, while a peripheral stalk is formed by the delta, b and b' chains.

It localises to the cellular thylakoid membrane. F(1)F(0) ATP synthase produces ATP from ADP in the presence of a proton or sodium gradient. F-type ATPases consist of two structural domains, F(1) containing the extramembraneous catalytic core and F(0) containing the membrane proton channel, linked together by a central stalk and a peripheral stalk. During catalysis, ATP synthesis in the catalytic domain of F(1) is coupled via a rotary mechanism of the central stalk subunits to proton translocation. Functionally, this protein is part of the stalk that links CF(0) to CF(1). It either transmits conformational changes from CF(0) to CF(1) or is implicated in proton conduction. The sequence is that of ATP synthase subunit delta from Gloeothece citriformis (strain PCC 7424) (Cyanothece sp. (strain PCC 7424)).